The primary structure comprises 287 residues: Ribosomal RNA small subunit methyltransferase A (287 aa).

S-adenosyl-L-methionine is bound by residues Asn-28, Leu-30, Gly-55, Glu-76, Asp-101, and Asn-125.

This sequence belongs to the class I-like SAM-binding methyltransferase superfamily. rRNA adenine N(6)-methyltransferase family. RsmA subfamily.

It is found in the cytoplasm. It carries out the reaction adenosine(1518)/adenosine(1519) in 16S rRNA + 4 S-adenosyl-L-methionine = N(6)-dimethyladenosine(1518)/N(6)-dimethyladenosine(1519) in 16S rRNA + 4 S-adenosyl-L-homocysteine + 4 H(+). In terms of biological role, specifically dimethylates two adjacent adenosines (A1518 and A1519) in the loop of a conserved hairpin near the 3'-end of 16S rRNA in the 30S particle. May play a critical role in biogenesis of 30S subunits. The polypeptide is Ribosomal RNA small subunit methyltransferase A (Alkaliphilus metalliredigens (strain QYMF)).